The primary structure comprises 136 residues: Glutamyl-tRNA(Gln) amidotransferase subunit C, mitochondrial (136 aa).

A mitochondrion-targeting transit peptide spans 1 to 27 (MWARAVHLGLRAAARGRRGFTSKADPQ).

Belongs to the GatC family. As to quaternary structure, subunit of the heterotrimeric GatCAB amidotransferase (AdT) complex, composed of A (QRSL1), B (GATB) and C (GATC) subunits.

It is found in the mitochondrion. It carries out the reaction L-glutamyl-tRNA(Gln) + L-glutamine + ATP + H2O = L-glutaminyl-tRNA(Gln) + L-glutamate + ADP + phosphate + H(+). In terms of biological role, allows the formation of correctly charged Gln-tRNA(Gln) through the transamidation of misacylated Glu-tRNA(Gln) in the mitochondria. The reaction takes place in the presence of glutamine and ATP through an activated gamma-phospho-Glu-tRNA(Gln). The chain is Glutamyl-tRNA(Gln) amidotransferase subunit C, mitochondrial from Bos taurus (Bovine).